A 34-amino-acid chain; its full sequence is DDIT3 upstream open reading frame protein (34 aa).

Interacts with DDIT3 (isoform 1).

It localises to the nucleus. It is found in the cytoplasm. Its function is as follows. Product of the upstream open reading frame (uORF) of DDIT3/CHOP that is specifically produced in absence of stress, thereby preventing translation of downstream stress effector DDIT3/CHOP. The protein is DDIT3 upstream open reading frame protein of Mus musculus (Mouse).